Reading from the N-terminus, the 226-residue chain is Large ribosomal subunit protein uL3 (226 aa).

Gln160 is subject to N5-methylglutamine.

It belongs to the universal ribosomal protein uL3 family. Part of the 50S ribosomal subunit. Forms a cluster with proteins L14 and L19. Post-translationally, methylated by PrmB.

In terms of biological role, one of the primary rRNA binding proteins, it binds directly near the 3'-end of the 23S rRNA, where it nucleates assembly of the 50S subunit. This is Large ribosomal subunit protein uL3 from Leptothrix cholodnii (strain ATCC 51168 / LMG 8142 / SP-6) (Leptothrix discophora (strain SP-6)).